Consider the following 110-residue polypeptide: Large ribosomal subunit protein uL24 (110 aa).

This sequence belongs to the universal ribosomal protein uL24 family. In terms of assembly, part of the 50S ribosomal subunit.

In terms of biological role, one of two assembly initiator proteins, it binds directly to the 5'-end of the 23S rRNA, where it nucleates assembly of the 50S subunit. Its function is as follows. One of the proteins that surrounds the polypeptide exit tunnel on the outside of the subunit. This Desulfovibrio desulfuricans (strain ATCC 27774 / DSM 6949 / MB) protein is Large ribosomal subunit protein uL24.